The primary structure comprises 462 residues: A-type ATP synthase subunit B (462 aa).

Belongs to the ATPase alpha/beta chains family. In terms of assembly, has multiple subunits with at least A(3), B(3), C, D, E, F, H, I and proteolipid K(x).

It is found in the cell membrane. Functionally, component of the A-type ATP synthase that produces ATP from ADP in the presence of a proton gradient across the membrane. The B chain is a regulatory subunit. This chain is A-type ATP synthase subunit B, found in Pyrococcus furiosus (strain ATCC 43587 / DSM 3638 / JCM 8422 / Vc1).